The chain runs to 328 residues: Delta(3,5)-Delta(2,4)-dienoyl-CoA isomerase, mitochondrial (328 aa).

The transit peptide at 1 to 26 directs the protein to the mitochondrion; that stretch reads MAAGIVASRRLRDLLTRRLTASNYPG. Substrate is bound by residues 116–120 and Gly174; that span reads AGVDL. Lys231 carries the N6-succinyllysine modification. The residue at position 268 (Ser268) is a Phosphoserine. A Microbody targeting signal motif is present at residues 326-328; it reads SKL. Lys327 is subject to N6-acetyllysine.

The protein belongs to the enoyl-CoA hydratase/isomerase family. Homohexamer.

The protein localises to the mitochondrion. It is found in the peroxisome. It catalyses the reaction (3E,5Z)-octadienoyl-CoA = (2E,4E)-octadienoyl-CoA. The enzyme catalyses (3E,5Z,8Z,11Z,14Z)-eicosapentaenoyl-CoA = (2E,4E,8Z,11Z,14Z)-eicosapentaenoyl-CoA. It participates in lipid metabolism; fatty acid beta-oxidation. Functionally, isomerization of 3-trans,5-cis-dienoyl-CoA to 2-trans,4-trans-dienoyl-CoA. This Pongo abelii (Sumatran orangutan) protein is Delta(3,5)-Delta(2,4)-dienoyl-CoA isomerase, mitochondrial (ECH1).